Here is a 1473-residue protein sequence, read N- to C-terminus: Ovostatin (1473 aa).

The signal sequence occupies residues 1 to 36 (MHCFLGREILSFFCLTVRKMWLKFILAILLLHAAAG). N-linked (GlcNAc...) asparagine glycans are attached at residues asparagine 67, asparagine 82, asparagine 89, asparagine 191, asparagine 342, asparagine 403, asparagine 527, asparagine 588, asparagine 757, asparagine 1141, asparagine 1221, asparagine 1315, and asparagine 1347.

It belongs to the protease inhibitor I39 (alpha-2-macroglobulin) family. In terms of assembly, homotetramer, which consists of two pairs of disulfide-linked chains. In terms of processing, lacks the thioester bond found in other members of this family. Post-translationally, glycosylated; contains 56 glucosamine units per subunit.

It localises to the secreted. Its function is as follows. Is able to inhibit all four classes of proteinases by a unique 'trapping' mechanism. This protein has a peptide stretch, called the 'bait region' which contains specific cleavage sites for different proteinases. When a proteinase cleaves the bait region, a conformational change is induced in the protein which traps the proteinase. The entrapped enzyme remains active against low molecular weight substrates (activity against high molecular weight substrates is greatly reduced). This chain is Ovostatin, found in Gallus gallus (Chicken).